Reading from the N-terminus, the 217-residue chain is uncharacterized protein (217 aa).

This is an uncharacterized protein from Haemophilus influenzae (strain ATCC 51907 / DSM 11121 / KW20 / Rd).